The chain runs to 177 residues: Large ribosomal subunit protein uL10 (177 aa).

Belongs to the universal ribosomal protein uL10 family. As to quaternary structure, part of the ribosomal stalk of the 50S ribosomal subunit. The N-terminus interacts with L11 and the large rRNA to form the base of the stalk. The C-terminus forms an elongated spine to which L12 dimers bind in a sequential fashion forming a multimeric L10(L12)X complex.

Forms part of the ribosomal stalk, playing a central role in the interaction of the ribosome with GTP-bound translation factors. The polypeptide is Large ribosomal subunit protein uL10 (Kocuria rhizophila (strain ATCC 9341 / DSM 348 / NBRC 103217 / DC2201)).